A 25-amino-acid polypeptide reads, in one-letter code: Kappa-conotoxin RIIIJ (25 aa).

A 4-hydroxyproline mark is found at Pro2, Pro3, Pro7, Pro8, Pro13, Pro15, and Pro21. 3 cysteine pairs are disulfide-bonded: Cys4–Cys17, Cys5–Cys22, and Cys12–Cys23.

It belongs to the conotoxin M superfamily. As to expression, expressed by the venom duct.

The protein localises to the secreted. Its function is as follows. Kappa-conotoxins inhibits voltage-gated potassium channels. This toxin dose-dependently and reversibly inhibits the Kv1.2/KCNA2 channel in mammalia. Does not exert protective effect on cardiac tissue when administered after an ischemic event. This is Kappa-conotoxin RIIIJ from Conus radiatus (Rayed cone).